The following is a 557-amino-acid chain: Glutamyl-tRNA(Gln) amidotransferase subunit B, mitochondrial (557 aa).

The transit peptide at 1–41 directs the protein to the mitochondrion; that stretch reads MAAPMLRWGCRGRRWAFARVDGGSCHRRGAPTGSTSNQIRG. Residues 26 to 45 form a disordered region; the sequence is HRRGAPTGSTSNQIRGESSV. Polar residues predominate over residues 32 to 45; that stretch reads TGSTSNQIRGESSV. Position 529 is an N6-succinyllysine (lysine 529).

Belongs to the GatB/GatE family. GatB subfamily. As to quaternary structure, subunit of the heterotrimeric GatCAB amidotransferase (AdT) complex, composed of A (QRSL1), B (GATB) and C (GATC) subunits. As to expression, predominantly expressed in tissues characterized by high rates of oxidative phosphorylation (OxPhos), including muscle and heart.

The protein localises to the mitochondrion. It carries out the reaction L-glutamyl-tRNA(Gln) + L-glutamine + ATP + H2O = L-glutaminyl-tRNA(Gln) + L-glutamate + ADP + phosphate + H(+). Its function is as follows. Allows the formation of correctly charged Gln-tRNA(Gln) through the transamidation of misacylated Glu-tRNA(Gln) in the mitochondria. The reaction takes place in the presence of glutamine and ATP through an activated gamma-phospho-Glu-tRNA(Gln). The polypeptide is Glutamyl-tRNA(Gln) amidotransferase subunit B, mitochondrial (Homo sapiens (Human)).